A 371-amino-acid chain; its full sequence is tRNA-specific 2-thiouridylase MnmA (371 aa).

ATP is bound by residues 16–23 and M42; that span reads GMSGGVDS. The tract at residues 102–104 is interaction with target base in tRNA; the sequence is NPD. The Nucleophile role is filled by C107. C107 and C204 form a disulfide bridge. G132 provides a ligand contact to ATP. The segment at 154–156 is interaction with tRNA; sequence KDQ. The Cysteine persulfide intermediate role is filled by C204. Residues 316 to 317 form an interaction with tRNA region; the sequence is RY.

The protein belongs to the MnmA/TRMU family.

The protein resides in the cytoplasm. The catalysed reaction is S-sulfanyl-L-cysteinyl-[protein] + uridine(34) in tRNA + AH2 + ATP = 2-thiouridine(34) in tRNA + L-cysteinyl-[protein] + A + AMP + diphosphate + H(+). In terms of biological role, catalyzes the 2-thiolation of uridine at the wobble position (U34) of tRNA, leading to the formation of s(2)U34. The chain is tRNA-specific 2-thiouridylase MnmA from Shewanella pealeana (strain ATCC 700345 / ANG-SQ1).